The following is a 398-amino-acid chain: Meiotically up-regulated gene 126 protein (398 aa).

2 disordered regions span residues 30–81 (EEME…QRHR) and 119–260 (FESD…NSNS). Composition is skewed to polar residues over residues 119-135 (FESD…NFPT) and 183-199 (VQEN…QEPQ). Positions 210–222 (QANQQETSSNQEE) are enriched in low complexity. Positions 224-236 (SFDRQETQDDKQK) are enriched in basic and acidic residues. Over residues 248-260 (RNRNQATITNSNS) the composition is skewed to polar residues. The next 4 helical transmembrane spans lie at 269-289 (IFVI…DLIE), 305-325 (IFLW…YLAL), 341-361 (GACF…CFLI), and 373-393 (LEIY…GAIY).

The protein localises to the membrane. In terms of biological role, has a role in meiosis. The sequence is that of Meiotically up-regulated gene 126 protein (mug126) from Schizosaccharomyces pombe (strain 972 / ATCC 24843) (Fission yeast).